The chain runs to 268 residues: Bis(5'-nucleosyl)-tetraphosphatase, symmetrical (268 aa).

It belongs to the Ap4A hydrolase family.

It catalyses the reaction P(1),P(4)-bis(5'-adenosyl) tetraphosphate + H2O = 2 ADP + 2 H(+). In terms of biological role, hydrolyzes diadenosine 5',5'''-P1,P4-tetraphosphate to yield ADP. This Vibrio campbellii (strain ATCC BAA-1116) protein is Bis(5'-nucleosyl)-tetraphosphatase, symmetrical.